The sequence spans 565 residues: MPKRVLKGAAKRAREAKHARDAAKARRLSSFLNVRLNQEHIPHEILPNSASDDKLLDRPVTGADLFAPSSGPSSNSVYPSLLQEEYFWNYFWQTYHVSLCPILDDAQFKQHYQSLLIADGKGRKPSALVDIVVAACMQYHISTLPLGSQSGLVEGKDASVAGRWHYWRGQTLLTYELESLSISTLQCHVLCSIYLCGGSFHNMMDTAMAQAVRTAYILGLHRDLPSTLPEAKREMRRRLWWTVYFMDTRATMKLGRSFMLSESHSMPALCIDSLRVAASSGSTFVPADEDMTWLSFNLRQITLCRTFRAAYTSFHNTDFHLQEGQPIWDRPDALQAGAEIIAKHIPSLDAWCDSVPDALKLKRQDSNSRPFSTDGARVVLELSAPEWLQRQRMLLENTYHHVCVNLFRSMICFPYQPASQVHISENSLPGELATRCAAHAIALTKLTHQVLEETSLLDGWHEAFYCQWDAVMTLIGFVLAYPGSGTVTLEAKSAIHLAIAVSENFGFKFAVGTSASKIVQGLCAKSETLTANEYASAYIGASTQNANIYRIYGGQICGVIDWQNS.

Positions 204–273 (MDTAMAQAVR…HSMPALCIDS (70 aa)) are fungal transcription factor domain.

Its subcellular location is the nucleus. In terms of biological role, transcription factor that regulates specifically the 4'-methoxyviridicatin/aspoquinolone biosynthesis cluster. This chain is Transcription factor asqA, found in Emericella nidulans (strain FGSC A4 / ATCC 38163 / CBS 112.46 / NRRL 194 / M139) (Aspergillus nidulans).